The chain runs to 146 residues: uncharacterized protein (146 aa).

Residues 34–135 (EDKIVNDVMT…PLLEKAHALF (102 aa)) form the Glutaredoxin domain. C54 serves as a coordination point for [2Fe-2S] cluster.

Belongs to the glutaredoxin family. Monothiol subfamily.

This is an uncharacterized protein from Caenorhabditis elegans.